The following is a 356-amino-acid chain: Holliday junction branch migration complex subunit RuvB (356 aa).

The large ATPase domain (RuvB-L) stretch occupies residues 4–191; that stretch reads TDKLATEQRI…FGIVARLEFY (188 aa). ATP is bound by residues L30, R31, G72, K75, T76, T77, 138–140, R181, Y191, and R228; that span reads EDY. Residue T76 coordinates Mg(2+). The tract at residues 192 to 262 is small ATPAse domain (RuvB-S); the sequence is DAEQLSRIVR…VADAALAMLD (71 aa). Residues 265–356 are head domain (RuvB-H); that stretch reads PVGFDLMDRK…RGEWDTPDGK (92 aa). DNA is bound by residues R301, R320, and R325.

The protein belongs to the RuvB family. Homohexamer. Forms an RuvA(8)-RuvB(12)-Holliday junction (HJ) complex. HJ DNA is sandwiched between 2 RuvA tetramers; dsDNA enters through RuvA and exits via RuvB. An RuvB hexamer assembles on each DNA strand where it exits the tetramer. Each RuvB hexamer is contacted by two RuvA subunits (via domain III) on 2 adjacent RuvB subunits; this complex drives branch migration. In the full resolvosome a probable DNA-RuvA(4)-RuvB(12)-RuvC(2) complex forms which resolves the HJ.

It is found in the cytoplasm. The catalysed reaction is ATP + H2O = ADP + phosphate + H(+). Its function is as follows. The RuvA-RuvB-RuvC complex processes Holliday junction (HJ) DNA during genetic recombination and DNA repair, while the RuvA-RuvB complex plays an important role in the rescue of blocked DNA replication forks via replication fork reversal (RFR). RuvA specifically binds to HJ cruciform DNA, conferring on it an open structure. The RuvB hexamer acts as an ATP-dependent pump, pulling dsDNA into and through the RuvAB complex. RuvB forms 2 homohexamers on either side of HJ DNA bound by 1 or 2 RuvA tetramers; 4 subunits per hexamer contact DNA at a time. Coordinated motions by a converter formed by DNA-disengaged RuvB subunits stimulates ATP hydrolysis and nucleotide exchange. Immobilization of the converter enables RuvB to convert the ATP-contained energy into a lever motion, pulling 2 nucleotides of DNA out of the RuvA tetramer per ATP hydrolyzed, thus driving DNA branch migration. The RuvB motors rotate together with the DNA substrate, which together with the progressing nucleotide cycle form the mechanistic basis for DNA recombination by continuous HJ branch migration. Branch migration allows RuvC to scan DNA until it finds its consensus sequence, where it cleaves and resolves cruciform DNA. The chain is Holliday junction branch migration complex subunit RuvB from Burkholderia lata (strain ATCC 17760 / DSM 23089 / LMG 22485 / NCIMB 9086 / R18194 / 383).